The chain runs to 144 residues: Large ribosomal subunit protein uL22 (144 aa).

Residues R124–Q137 are compositionally biased toward basic residues. The disordered stretch occupies residues R124–K144.

Belongs to the universal ribosomal protein uL22 family. As to quaternary structure, part of the 50S ribosomal subunit.

Its function is as follows. This protein binds specifically to 23S rRNA; its binding is stimulated by other ribosomal proteins, e.g. L4, L17, and L20. It is important during the early stages of 50S assembly. It makes multiple contacts with different domains of the 23S rRNA in the assembled 50S subunit and ribosome. Functionally, the globular domain of the protein is located near the polypeptide exit tunnel on the outside of the subunit, while an extended beta-hairpin is found that lines the wall of the exit tunnel in the center of the 70S ribosome. The polypeptide is Large ribosomal subunit protein uL22 (Mycoplasmoides gallisepticum (strain R(low / passage 15 / clone 2)) (Mycoplasma gallisepticum)).